The primary structure comprises 79 residues: Small ribosomal subunit protein bS16 (79 aa).

The protein belongs to the bacterial ribosomal protein bS16 family.

The polypeptide is Small ribosomal subunit protein bS16 (Desulfovibrio desulfuricans (strain ATCC 27774 / DSM 6949 / MB)).